The sequence spans 150 residues: Cytochrome c-type biogenesis protein CcmE (150 aa).

At 1 to 7 the chain is on the cytoplasmic side; it reads MTRKQKR. A helical; Signal-anchor for type II membrane protein membrane pass occupies residues 8-28; that stretch reads LAIIGGGVGFLTAAVLLVMFA. Topologically, residues 29-150 are periplasmic; the sequence is FSQAVAYFYV…VTLGGEENIR (122 aa). Heme is bound by residues H123 and Y127.

This sequence belongs to the CcmE/CycJ family.

The protein resides in the cell inner membrane. Heme chaperone required for the biogenesis of c-type cytochromes. Transiently binds heme delivered by CcmC and transfers the heme to apo-cytochromes in a process facilitated by CcmF and CcmH. This Sinorhizobium medicae (strain WSM419) (Ensifer medicae) protein is Cytochrome c-type biogenesis protein CcmE.